Consider the following 130-residue polypeptide: Iron-sulfur cluster insertion protein ErpA (130 aa).

The iron-sulfur cluster site is built by C46, C116, and C118.

It belongs to the HesB/IscA family. Homodimer. The cofactor is iron-sulfur cluster.

Its function is as follows. Required for insertion of 4Fe-4S clusters for at least IspG. The polypeptide is Iron-sulfur cluster insertion protein ErpA (Legionella pneumophila subsp. pneumophila (strain Philadelphia 1 / ATCC 33152 / DSM 7513)).